The chain runs to 1053 residues: Carbamoyl phosphate synthase large chain (1053 aa).

Residues 1-397 are carboxyphosphate synthetic domain; sequence MPKRTDIKKV…SFMKAKRSID (397 aa). Positions 127, 167, 173, 174, 206, 208, 213, 239, 240, 241, 282, and 294 each coordinate ATP. In terms of domain architecture, ATP-grasp 1 spans 131 to 323; that stretch reads RDLMNEIGEP…IARVAAKIAI (193 aa). Residues Gln282, Glu294, and Asn296 each coordinate Mg(2+). 3 residues coordinate Mn(2+): Gln282, Glu294, and Asn296. The segment at 398–530 is oligomerization domain; the sequence is TDVRTHTSPS…YSTREGTSEI (133 aa). The interval 531–919 is carbamoyl phosphate synthetic domain; the sequence is VRDKKQKILI…YKACISADNE (389 aa). In terms of domain architecture, ATP-grasp 2 spans 661-852; it reads SVLLTTLQIP…IAKIAAKVMI (192 aa). ATP is bound by residues Arg697, Ser736, Leu738, Glu743, Gly768, Ile769, His770, Ser771, Gln811, and Glu823. Positions 811, 823, and 825 each coordinate Mg(2+). Mn(2+) is bound by residues Gln811, Glu823, and Asn825. Positions 918–1053 constitute an MGS-like domain; that stretch reads NELPLKGNVF…TLEPLSHYLR (136 aa). The allosteric domain stretch occupies residues 920-1053; the sequence is LPLKGNVFVS…TLEPLSHYLR (134 aa).

It belongs to the CarB family. In terms of assembly, composed of two chains; the small (or glutamine) chain promotes the hydrolysis of glutamine to ammonia, which is used by the large (or ammonia) chain to synthesize carbamoyl phosphate. Tetramer of heterodimers (alpha,beta)4. The cofactor is Mg(2+). Mn(2+) is required as a cofactor.

It catalyses the reaction hydrogencarbonate + L-glutamine + 2 ATP + H2O = carbamoyl phosphate + L-glutamate + 2 ADP + phosphate + 2 H(+). The catalysed reaction is hydrogencarbonate + NH4(+) + 2 ATP = carbamoyl phosphate + 2 ADP + phosphate + 2 H(+). The protein operates within amino-acid biosynthesis; L-arginine biosynthesis; carbamoyl phosphate from bicarbonate: step 1/1. It functions in the pathway pyrimidine metabolism; UMP biosynthesis via de novo pathway; (S)-dihydroorotate from bicarbonate: step 1/3. Functionally, large subunit of the glutamine-dependent carbamoyl phosphate synthetase (CPSase). CPSase catalyzes the formation of carbamoyl phosphate from the ammonia moiety of glutamine, carbonate, and phosphate donated by ATP, constituting the first step of 2 biosynthetic pathways, one leading to arginine and/or urea and the other to pyrimidine nucleotides. The large subunit (synthetase) binds the substrates ammonia (free or transferred from glutamine from the small subunit), hydrogencarbonate and ATP and carries out an ATP-coupled ligase reaction, activating hydrogencarbonate by forming carboxy phosphate which reacts with ammonia to form carbamoyl phosphate. The chain is Carbamoyl phosphate synthase large chain from Methanoregula boonei (strain DSM 21154 / JCM 14090 / 6A8).